We begin with the raw amino-acid sequence, 152 residues long: ALK and LTK ligand 2 (152 aa).

Residues 1–24 (MRGPGHPLLLGLLLVLGAAGRGRG) form the signal peptide. Disulfide bonds link C111–C147 and C125–C134.

It belongs to the ALKAL family. Homodimer; interchain disulfide bond is not required for homodimerization. In terms of tissue distribution, widely expressed with highest levels in adrenal gland and modest levels in pancreas, testis and uterus.

The protein resides in the secreted. It localises to the cell membrane. Cytokine that acts as a physiological ligand for receptor tyrosine kinases LTK and ALK, leading to their activation. Cytokine-binding is sufficient to activate LTK. In contrast, ALKAL2-driven activation of ALK is coupled with heparin-binding to ALK. Stimulation of ALK signaling is involved in neural development and regulation of energy expenditure. The polypeptide is ALK and LTK ligand 2 (Homo sapiens (Human)).